We begin with the raw amino-acid sequence, 198 residues long: MIEQIKANFTESIQTKIAASEILPEHIEKAAYMIVEALIRGNKVLSCGNGGSAGDAQHFASNMLNRYERDRPSLPAIALSTDTSTITSIANDYSYDEIFAKQVRALGQPGDILLAISTSGNSRNVIAAMEAALSRDMTIVALTGKDGGEMAGFLSEHDVEIRVPSNRTARIQEVHLLVIHNLCECIDDSLFPADHGDE.

Residues 34–196 (IVEALIRGNK…DDSLFPADHG (163 aa)) form the SIS domain. 49–51 (NGG) is a binding site for substrate. Zn(2+) is bound by residues H58 and N62. Substrate-binding positions include N62, 91 to 92 (ND), 117 to 119 (STS), S122, and Q172. Q172 and H180 together coordinate Zn(2+).

Belongs to the SIS family. GmhA subfamily. In terms of assembly, homotetramer. Zn(2+) is required as a cofactor.

It is found in the cytoplasm. The catalysed reaction is 2 D-sedoheptulose 7-phosphate = D-glycero-alpha-D-manno-heptose 7-phosphate + D-glycero-beta-D-manno-heptose 7-phosphate. The protein operates within carbohydrate biosynthesis; D-glycero-D-manno-heptose 7-phosphate biosynthesis; D-glycero-alpha-D-manno-heptose 7-phosphate and D-glycero-beta-D-manno-heptose 7-phosphate from sedoheptulose 7-phosphate: step 1/1. Its function is as follows. Catalyzes the isomerization of sedoheptulose 7-phosphate in D-glycero-D-manno-heptose 7-phosphate. The polypeptide is Phosphoheptose isomerase (Alteromonas mediterranea (strain DSM 17117 / CIP 110805 / LMG 28347 / Deep ecotype)).